The following is a 68-amino-acid chain: Amphipathic peptide CT1 (68 aa).

The first 23 residues, Met-1–Ala-23, serve as a signal peptide directing secretion. Leu-36 is modified (leucine amide). The propeptide occupies Gly-40 to Arg-68.

It belongs to the non-disulfide-bridged peptide (NDBP) superfamily. Short antimicrobial peptide (group 4) family. In terms of tissue distribution, expressed by the venom gland.

It is found in the secreted. The protein localises to the target cell membrane. In terms of biological role, amphipathic peptide that shows no antibacterial activity even at 50 uM but shows a low hemolytic activity against human erythrocytes. The chain is Amphipathic peptide CT1 from Mesomexovis subcristatus (Scorpion).